We begin with the raw amino-acid sequence, 291 residues long: Ribosome biogenesis protein BRX1 (291 aa).

Residues Gln-31–Gly-232 form the Brix domain. Ser-285 bears the Phosphoserine mark.

Belongs to the BRX1 family. In terms of assembly, part of a complex that includes BRX1, RPF1, RPF2 and SSF1 or SSF2.

Its subcellular location is the nucleus. The protein resides in the nucleolus. Its function is as follows. Required for biogenesis of the 60S ribosomal subunit. The chain is Ribosome biogenesis protein BRX1 (BRX1) from Saccharomyces cerevisiae (strain ATCC 204508 / S288c) (Baker's yeast).